Reading from the N-terminus, the 362-residue chain is Heat-inducible transcription repressor HrcA (362 aa).

It belongs to the HrcA family.

In terms of biological role, negative regulator of class I heat shock genes (grpE-dnaK-dnaJ and groELS operons). Prevents heat-shock induction of these operons. The polypeptide is Heat-inducible transcription repressor HrcA (Rhizobium rhizogenes (strain K84 / ATCC BAA-868) (Agrobacterium radiobacter)).